The following is a 91-amino-acid chain: UPF0728 protein v1g117062 (91 aa).

It belongs to the UPF0728 family.

This is UPF0728 protein v1g117062 from Nematostella vectensis (Starlet sea anemone).